A 397-amino-acid chain; its full sequence is Putative protein FAM47D (397 aa).

This sequence belongs to the FAM47 family.

The polypeptide is Putative protein FAM47D (FAM47DP) (Homo sapiens (Human)).